The sequence spans 295 residues: Delta-1-pyrroline-5-carboxylate reductase apf3 (295 aa).

This sequence belongs to the pyrroline-5-carboxylate reductase family.

It functions in the pathway secondary metabolite biosynthesis. Delta-1-pyrroline-5-carboxylate reductase; part of the gene cluster that mediates the biosynthesis of the cyclic tetrapeptide apicidin F (APF). The non-ribosomal peptide synthetase apf1 incorporates four different amino acids to produce apicidin F: L-phenylalanine, D-pipecolic acid (D-pip), N-methoxy-L-tryptophan and L-2-aminooctanedioic acid. L-Phenylalanine is the only proteinogenic amino acid directly used by apf1. The 3 other apf1 substrates are non-proteinogenic and have to be modified by other enzymes of the cluster. Lysine is converted to delta-1-pyrroline-5-carboxylate (P5C) which is reduced to L-pipecolic acid (L-pip) by apf3. L-pip is epimerized to D-pip, probably by apf1 activity, prior to incorporation. L-Tryptophan is N-oxidyzed by one of the cytochrome P450 monooxygenases (apf7 or apf8), and further methylated at the hydroxy group by the O-methyltransferase apf6 to yield N-methoxy-L-tryptophan. The synthesis of the fourth apf1 substrate is more complex. The fatty acid synthase apf5 is involved in the synthesis of the octanoic acid backbone of L-2-aminooctanedioic acid by fixing one acetyl-CoA unit and three malonyl-CoA units. Then one of the cytochrome P450 monooxygenases (apf7 or apf8) may oxidize this backbone to 2-oxooctanoic acid. The aminotransferase apf4 is predicted to catalyze the exchange of the keto group with an amino group. The next step would be the oxidation of 2-aminooctanoic acid by one of the cytochrome P450 monooxygenases (apf7 or apf8). The last step is the oxidation of 2-amino-8-hydroxyoctanoic acid to 2-aminooctanedioic acid is catalyzed by the FAD-dependent monooxygenase apf9. The sequence is that of Delta-1-pyrroline-5-carboxylate reductase apf3 from Gibberella fujikuroi (strain CBS 195.34 / IMI 58289 / NRRL A-6831) (Bakanae and foot rot disease fungus).